Reading from the N-terminus, the 282-residue chain is Aquaporin PIP-type (282 aa).

Helical transmembrane passes span 39-61 (WRAA…ATVI) and 74-96 (GLLG…TAGI). The short motif at 102 to 104 (NPA) is the NPA 1 element. A run of 4 helical transmembrane segments spans residues 116–138 (SLLR…VGLV), 159–181 (GYNK…YTVF), 201–223 (LPIG…TGIN), and 243–265 (HWIF…QYVL). An NPA 2 motif is present at residues 223 to 225 (NPA).

This sequence belongs to the MIP/aquaporin (TC 1.A.8) family. PIP (TC 1.A.8.11) subfamily.

Its subcellular location is the membrane. Water-specific channel. In Atriplex canescens (Fourwing saltbush), this protein is Aquaporin PIP-type.